The chain runs to 385 residues: Putative cell agglutination protein pfl8 (385 aa).

The signal sequence occupies residues methionine 1 to serine 20. Residues serine 41 to tyrosine 90 form a disordered region. N-linked (GlcNAc...) asparagine glycosylation is found at asparagine 72, asparagine 270, and asparagine 346. The PA14 domain maps to glutamate 196–tyrosine 360.

The protein localises to the secreted. It localises to the cell surface. In terms of biological role, may be involved in agglutination during conjugation or other aspects of colony formation. Induces flocculation when overexpressed. This chain is Putative cell agglutination protein pfl8, found in Schizosaccharomyces pombe (strain 972 / ATCC 24843) (Fission yeast).